The sequence spans 1080 residues: uncharacterized protein (1080 aa).

The N-terminal stretch at 1-17 (MHKLLVIIAHIIVCAYA) is a signal peptide. The Extracellular segment spans residues 18–1042 (DFTGFDNEAG…KSLDLEMIGK (1025 aa)). Residues N439, N664, and N875 are each glycosylated (N-linked (GlcNAc...) asparagine; by host). Residues 1043 to 1063 (IILLIAFVIVFVILLTIGIIT) form a helical membrane-spanning segment. Residues 1064-1080 (LVKRHRETLPEDEYLLP) lie on the Cytoplasmic side of the membrane.

The protein localises to the host membrane. This is an uncharacterized protein from Ostreid herpesvirus 1 (isolate France) (OsHV-1).